The sequence spans 222 residues: PKHD-type hydroxylase Syncc9605_1577 (222 aa).

The 96-residue stretch at 80–175 folds into the Fe2OG dioxygenase domain; it reads KVHSLLVSRS…RYVCVGWIES (96 aa). Fe cation-binding residues include His98, Asp100, and His156. Arg166 contributes to the 2-oxoglutarate binding site.

It depends on Fe(2+) as a cofactor. Requires L-ascorbate as cofactor.

The protein is PKHD-type hydroxylase Syncc9605_1577 of Synechococcus sp. (strain CC9605).